Here is a 278-residue protein sequence, read N- to C-terminus: Putative ABC transporter ATP-binding protein MTBMA_c05830 (278 aa).

Positions 4–239 constitute an ABC transporter domain; that stretch reads IEAVNIRYTY…IDTIRGADLR (236 aa). ATP is bound at residue 37 to 44; sequence GPNGAGKS.

This sequence belongs to the ABC transporter superfamily.

The protein resides in the cell membrane. In terms of biological role, probably part of an ABC transporter complex. Responsible for energy coupling to the transport system. In Methanothermobacter marburgensis (strain ATCC BAA-927 / DSM 2133 / JCM 14651 / NBRC 100331 / OCM 82 / Marburg) (Methanobacterium thermoautotrophicum), this protein is Putative ABC transporter ATP-binding protein MTBMA_c05830.